The sequence spans 253 residues: Porin thermoregulatory protein EnvY (253 aa).

Residues 149–246 (DSVCRIIQSD…GLTPLNYLAK (98 aa)) enclose the HTH araC/xylS-type domain. DNA-binding regions (H-T-H motif) lie at residues 166–187 (RIVASSLCLSPSLLKKKLKNEN) and 213–236 (ITQVAQLCGYSSTSYFISVFKAFY).

Functionally, influences the temperature-dependent expression of several E.coli envelope proteins, most notably the porins OmpF and OmpC and the lambda receptor, LamB. This Escherichia coli (strain K12) protein is Porin thermoregulatory protein EnvY (envY).